Reading from the N-terminus, the 130-residue chain is Small ribosomal subunit protein uS9 (130 aa).

This sequence belongs to the universal ribosomal protein uS9 family.

This is Small ribosomal subunit protein uS9 from Streptococcus mutans serotype c (strain ATCC 700610 / UA159).